The sequence spans 400 residues: Na(+)/H(+) antiporter NhaA 1 (400 aa).

11 consecutive transmembrane segments (helical) span residues isoleucine 25–methionine 45, isoleucine 67–isoleucine 87, isoleucine 103–phenylalanine 123, isoleucine 130–leucine 150, isoleucine 159–alanine 179, serine 184–alanine 204, tryptophan 213–glutamate 233, valine 264–isoleucine 284, isoleucine 303–valine 323, leucine 339–leucine 359, and isoleucine 372–isoleucine 392.

The protein belongs to the NhaA Na(+)/H(+) (TC 2.A.33) antiporter family.

The protein resides in the cell membrane. The catalysed reaction is Na(+)(in) + 2 H(+)(out) = Na(+)(out) + 2 H(+)(in). Its function is as follows. Na(+)/H(+) antiporter that extrudes sodium in exchange for external protons. The polypeptide is Na(+)/H(+) antiporter NhaA 1 (Clostridium beijerinckii (strain ATCC 51743 / NCIMB 8052) (Clostridium acetobutylicum)).